A 126-amino-acid chain; its full sequence is Aspartate 1-decarboxylase (126 aa).

The Schiff-base intermediate with substrate; via pyruvic acid role is filled by serine 25. Serine 25 is modified (pyruvic acid (Ser)). Threonine 57 lines the substrate pocket. Tyrosine 58 serves as the catalytic Proton donor. 73–75 is a binding site for substrate; the sequence is GAA.

The protein belongs to the PanD family. Heterooctamer of four alpha and four beta subunits. Pyruvate serves as cofactor. In terms of processing, is synthesized initially as an inactive proenzyme, which is activated by self-cleavage at a specific serine bond to produce a beta-subunit with a hydroxyl group at its C-terminus and an alpha-subunit with a pyruvoyl group at its N-terminus.

Its subcellular location is the cytoplasm. It catalyses the reaction L-aspartate + H(+) = beta-alanine + CO2. The protein operates within cofactor biosynthesis; (R)-pantothenate biosynthesis; beta-alanine from L-aspartate: step 1/1. Its function is as follows. Catalyzes the pyruvoyl-dependent decarboxylation of aspartate to produce beta-alanine. In Edwardsiella ictaluri (strain 93-146), this protein is Aspartate 1-decarboxylase.